A 213-amino-acid chain; its full sequence is Ras-related protein Rab-2 (213 aa).

Residues Thr15, Gly16, Gly18, Lys19, Ser20, Cys21, Gln32, Pro33, His35, Thr38, Gly64, Asn119, Asp122, and Ala150 each coordinate GTP. Position 20 (Ser20) interacts with Mg(2+). Residue Thr38 coordinates Mg(2+). The disordered stretch occupies residues 190–213 (QHSPTNPSLPGAGGAAGAANSGCC). 2 S-geranylgeranyl cysteine lipidation sites follow: Cys212 and Cys213.

The protein belongs to the small GTPase superfamily. Rab family. In terms of assembly, interacts (GTP-bound form) with Vps16A and Vps39; the interaction with Vps39 is probably direct.

The protein localises to the vesicle. The protein resides in the cytoplasmic vesicle. It is found in the cell projection. It localises to the axon. Its subcellular location is the presynapse. The protein localises to the presynaptic active zone. The protein resides in the golgi apparatus. It is found in the trans-Golgi network. It localises to the perikaryon. Its subcellular location is the autophagosome membrane. The protein localises to the autolysosome membrane. The catalysed reaction is GTP + H2O = GDP + phosphate + H(+). May be involved in bidirectional endoplasmic reticulum (ER) to Golgi trafficking. Together with Rab7 involved in promoting fusion of autophagosomes and endosomes with lysosomes, probably through recruitment of the HOPS tethering complex. Involved in biosynthetic transport to lysosomes. In larval motor neurons, mediates the biogenesis of presynaptic cargo vesicles and their long-range axonal trafficking to synaptic termini. Not involved in axonal trafficking of mitochondria. During vesicle biogenesis, active zone proteins (including brp/Bruchpilot) and synaptic vesicle proteins (including VGlut) are sorted from the trans-Golgi in a Rab2-dependent manner via, at least, two independent routes. Acts upstream of Arl8 during presynaptic precursor vesicle biogenesis. Associated with lysosomal marker positive presynaptic cargo vesicles during anterograde and retrograde axonal trafficking, probably while in its GTP-bound active state. Involved in the delivery of presynaptic cargos, but not presynapse assembly or active zone function at synaptic termini. Required for autophagocytosis-dependent remodeling of myofibrils and transverse-tubules (T-tubules) during metamorphosis. The chain is Ras-related protein Rab-2 from Drosophila melanogaster (Fruit fly).